The following is a 248-amino-acid chain: MDHSIEVTFRVKTQQVIIPEQNIRGNELPLRRWQMELLMLDATGKEVEPTILSKCIYHLHSSFKQPKRRLNSLPFFIKETGWGEFNLKIECFFIGNAGKFSIEHDLTFEDDAYAVDYTVDVPHEFSHLNSELSKYFDLPWKVVSPEEEMSLRIADLPWIKSLALIDEDMMTDVVQMILNDPAVQRAIENHPRREQFFMFITQLPDDLLMKIQAFLKLPNKNSTKQERTNFGSDAIHKDEPVKAHNKLK.

The 139-residue stretch at 1-139 folds into the YEATS domain; the sequence is MDHSIEVTFR…SELSKYFDLP (139 aa). Phosphoserine is present on S144. The segment at 223-248 is disordered; it reads TKQERTNFGSDAIHKDEPVKAHNKLK.

As to quaternary structure, component of the SAS complex, at least composed of SAS2, SAS4 and SAS5. These three proteins constitute the core of the complex, and are sufficient to acetylate histones.

The protein localises to the nucleus. In terms of biological role, component of the SAS complex, a multiprotein complex that acetylates 'Lys-16' of histone H4 and 'Lys-14' of histone H3. The SAS complex is however unable to acetylate nucleosomal histones. The complex is involved in transcriptional silencing at telomeres and at HML locus. Also involved in rDNA silencing. In the complex, SAS5 is required for maximal histone acetyltransferase (HAT) activity of the complex, suggesting that it may be required to stabilize the complex or help in substrate recognition. In Saccharomyces cerevisiae (strain ATCC 204508 / S288c) (Baker's yeast), this protein is Something about silencing protein 5 (SAS5).